Reading from the N-terminus, the 346-residue chain is tRNA N6-adenosine threonylcarbamoyltransferase (346 aa).

Positions 109, 113, and 135 each coordinate Fe cation. Substrate is bound by residues 135–139 (YVSGG), D167, G180, E184, and N263. Residue D291 participates in Fe cation binding.

It belongs to the KAE1 / TsaD family. Monomer. Component of the KEOPS complex that consists of Kae1, Bud32, Cgi121 and Pcc1; the whole complex dimerizes. The cofactor is Fe(2+).

It is found in the cytoplasm. The catalysed reaction is L-threonylcarbamoyladenylate + adenosine(37) in tRNA = N(6)-L-threonylcarbamoyladenosine(37) in tRNA + AMP + H(+). Required for the formation of a threonylcarbamoyl group on adenosine at position 37 (t(6)A37) in tRNAs that read codons beginning with adenine. Is a component of the KEOPS complex that is probably involved in the transfer of the threonylcarbamoyl moiety of threonylcarbamoyl-AMP (TC-AMP) to the N6 group of A37. Kae1 likely plays a direct catalytic role in this reaction, but requires other protein(s) of the complex to fulfill this activity. The polypeptide is tRNA N6-adenosine threonylcarbamoyltransferase (Methanopyrus kandleri (strain AV19 / DSM 6324 / JCM 9639 / NBRC 100938)).